The sequence spans 403 residues: Ribosomal RNA large subunit methyltransferase I (403 aa).

The region spanning 9 to 86 (YPRLVLSKGR…KAESIDIAFF (78 aa)) is the PUA domain.

This sequence belongs to the methyltransferase superfamily. RlmI family.

It is found in the cytoplasm. The catalysed reaction is cytidine(1962) in 23S rRNA + S-adenosyl-L-methionine = 5-methylcytidine(1962) in 23S rRNA + S-adenosyl-L-homocysteine + H(+). Specifically methylates the cytosine at position 1962 (m5C1962) of 23S rRNA. The protein is Ribosomal RNA large subunit methyltransferase I of Salmonella gallinarum (strain 287/91 / NCTC 13346).